The following is a 120-amino-acid chain: Large ribosomal subunit protein bL17 (120 aa).

It belongs to the bacterial ribosomal protein bL17 family. As to quaternary structure, part of the 50S ribosomal subunit. Contacts protein L32.

The polypeptide is Large ribosomal subunit protein bL17 (Mycoplasmopsis synoviae (strain 53) (Mycoplasma synoviae)).